The following is a 145-amino-acid chain: Small ribosomal subunit protein uS12 (145 aa).

P64 carries the hydroxyproline modification.

It belongs to the universal ribosomal protein uS12 family.

In Aspergillus fumigatus (strain ATCC MYA-4609 / CBS 101355 / FGSC A1100 / Af293) (Neosartorya fumigata), this protein is Small ribosomal subunit protein uS12 (rps23).